Consider the following 406-residue polypeptide: Probable endo-xylogalacturonan hydrolase A (406 aa).

A signal peptide spans 1–18 (MLYPRNLALFSLLSLSSA). PbH1 repeat units follow at residues 183–213 (TQHVTFKNLRMDATSNSQNPPKNTDGFDIGA), 214–235 (STHVTISSVSVTNDDDCVAFKP), 237–257 (SNYVTVEDVTCTGSHGISVGS), and 299–320 (VKNVTFSDFNVRGCDYAFQIES). Asp228 (proton donor) is an active-site residue. His251 is a catalytic residue. Asn301 carries an N-linked (GlcNAc...) asparagine glycan.

It belongs to the glycosyl hydrolase 28 family.

It localises to the secreted. Pectinolytic enzyme involved in the degradation of xylogalacturonan (xga), a galacturonan backbone heavily substituted with xylose, and which is one important component of the hairy regions of pectin. Activity requires a galacturonic acid backbone substituted with xylose. The sequence is that of Probable endo-xylogalacturonan hydrolase A (xghA) from Aspergillus fumigatus (strain CBS 144.89 / FGSC A1163 / CEA10) (Neosartorya fumigata).